Here is a 339-residue protein sequence, read N- to C-terminus: MEPIHNPPPQTCSYSRPSTTYTSFKDASCDTKVTRIIIALFLIVISCGLILCAYTFRDLLDADYLAQEGPQQATKLLQQLDDVLTGPPLPIWDNEHLFQFSCLMQNKHRRVLPIDICNPLTKFNFLECICNCLMTKQSVNVNETDMCELFCPPTCTPENYRRLLCTSSVFPFVMWHDPSADTQEAMLTKMDQTMSSGRVGNSHWVLVIVDIEYRCVTFFDSLCDYVASPQQMREQLEGLAVSLGAIYPKEGGADSDQEELLSPFQVRIGSTVKVQSPGEFTCGAWCCQFLAWYLENPDFDLEEKVPTNPSERRALLADFISTTEQAMSRYSSLSWPTTD.

A helical transmembrane segment spans residues 36–56 (IIIALFLIVISCGLILCAYTF). Active-site residues include His203, Asp220, and Cys282.

It belongs to the peptidase C48 family.

It is found in the secreted. The protein localises to the host cell. Its subcellular location is the membrane. Functionally, effector proteins function to alter host cell physiology and promote bacterial survival in host tissues. This protease possesses deubiquitinating and deneddylating activities. In Chlamydia trachomatis serovar L2 (strain ATCC VR-902B / DSM 19102 / 434/Bu), this protein is Deubiquitinase and deneddylase Dub2 (cdu2).